Here is a 144-residue protein sequence, read N- to C-terminus: 3-dehydroquinate dehydratase (144 aa).

Catalysis depends on Tyr24, which acts as the Proton acceptor. Residues Asn73, His79, and Asp86 each coordinate substrate. His99 (proton donor) is an active-site residue. Residues 100-101 (LS) and Arg110 each bind substrate.

Belongs to the type-II 3-dehydroquinase family. In terms of assembly, homododecamer.

The enzyme catalyses 3-dehydroquinate = 3-dehydroshikimate + H2O. Its pathway is metabolic intermediate biosynthesis; chorismate biosynthesis; chorismate from D-erythrose 4-phosphate and phosphoenolpyruvate: step 3/7. Functionally, catalyzes a trans-dehydration via an enolate intermediate. This chain is 3-dehydroquinate dehydratase, found in Shewanella putrefaciens (strain CN-32 / ATCC BAA-453).